Here is a 206-residue protein sequence, read N- to C-terminus: Thymidylate kinase (206 aa).

Residue 7-14 coordinates ATP; it reads GGEGSGKS.

It belongs to the thymidylate kinase family.

The enzyme catalyses dTMP + ATP = dTDP + ADP. Its function is as follows. Phosphorylation of dTMP to form dTDP in both de novo and salvage pathways of dTTP synthesis. This chain is Thymidylate kinase (tmk), found in Chlamydia pneumoniae (Chlamydophila pneumoniae).